The primary structure comprises 749 residues: Small G protein signaling modulator 3 (749 aa).

The 192-residue stretch at 113–304 (GIPHGMRPQL…RIWDLFFYEG (192 aa)) folds into the Rab-GAP TBC domain. Ser-405 carries the phosphoserine modification. The stretch at 414–438 (EDDLEALKAKNIKQTELVADLREAI) forms a coiled coil. The 60-residue stretch at 479 to 538 (SHRRRAKALLDFERHDDDELGFRKNDIITIISQKDEHCWVGELNGLRGWFPAKFVEVLDE) folds into the SH3 domain. Residues 554–717 (GVTDLVRGTL…FAFSLSQDWE (164 aa)) enclose the RUN domain.

This sequence belongs to the small G protein signaling modulator family. As to quaternary structure, interacts with GJA1. Interaction with GJA1 induces its degradation. Interacts (via RUN domain) with NF2 (via C-terminus). Interacts with RAB3A, RAB4A, RAB5A, RAB8A, RAB11A, RAP1A, RAP1B, RAP2A, RAP2B and PDCD6I. No interaction with RAB27A. No interaction with GJB1 or GJD2. As to expression, expressed in brain, liver, kidney and testis. Moderately expressed in heart, very weakly in lung and muscle. Not expressed in spleen.

The protein resides in the cytoplasm. Functionally, may play a cooperative role in NF2-mediated growth suppression of cells. May act as a modulator of small G protein RAB- and RAP-mediated neuronal signal transduction and vesicular transportation pathways. The protein is Small G protein signaling modulator 3 of Rattus norvegicus (Rat).